The chain runs to 362 residues: Chorismate synthase (362 aa).

Residue R47 coordinates NADP(+). FMN-binding positions include 124 to 126 (RSS), G286, 301 to 305 (KPTAT), and R327.

This sequence belongs to the chorismate synthase family. In terms of assembly, homotetramer. FMNH2 serves as cofactor.

The enzyme catalyses 5-O-(1-carboxyvinyl)-3-phosphoshikimate = chorismate + phosphate. It participates in metabolic intermediate biosynthesis; chorismate biosynthesis; chorismate from D-erythrose 4-phosphate and phosphoenolpyruvate: step 7/7. Catalyzes the anti-1,4-elimination of the C-3 phosphate and the C-6 proR hydrogen from 5-enolpyruvylshikimate-3-phosphate (EPSP) to yield chorismate, which is the branch point compound that serves as the starting substrate for the three terminal pathways of aromatic amino acid biosynthesis. This reaction introduces a second double bond into the aromatic ring system. The polypeptide is Chorismate synthase (Rippkaea orientalis (strain PCC 8801 / RF-1) (Cyanothece sp. (strain PCC 8801))).